Consider the following 396-residue polypeptide: Elongation factor Tu (396 aa).

The 197-residue stretch at 10-206 (KLHVNVGTIG…ALDTHIPNPE (197 aa)) folds into the tr-type G domain. The tract at residues 19–26 (GHVDHGKT) is G1. A GTP-binding site is contributed by 19–26 (GHVDHGKT). Mg(2+) is bound at residue Thr26. The interval 60-64 (GITIS) is G2. The G3 stretch occupies residues 81 to 84 (DCPG). Residues 81–85 (DCPGH) and 136–139 (NKAD) contribute to the GTP site. Residues 136 to 139 (NKAD) are G4. The segment at 174–176 (SAL) is G5.

The protein belongs to the TRAFAC class translation factor GTPase superfamily. Classic translation factor GTPase family. EF-Tu/EF-1A subfamily. Monomer.

The protein localises to the cytoplasm. It catalyses the reaction GTP + H2O = GDP + phosphate + H(+). Its function is as follows. GTP hydrolase that promotes the GTP-dependent binding of aminoacyl-tRNA to the A-site of ribosomes during protein biosynthesis. The protein is Elongation factor Tu of Xylella fastidiosa (strain 9a5c).